A 292-amino-acid chain; its full sequence is Cyclin-dependent kinase A-2 (292 aa).

Residues tyrosine 4–phenylalanine 286 enclose the Protein kinase domain. ATP contacts are provided by residues isoleucine 10–valine 18 and lysine 33. A Phosphothreonine modification is found at threonine 14. Residue tyrosine 15 is modified to Phosphotyrosine. Residue aspartate 126 is the Proton acceptor of the active site. Threonine 160 is subject to Phosphothreonine.

This sequence belongs to the protein kinase superfamily. CMGC Ser/Thr protein kinase family. CDC2/CDKX subfamily. Expressed in the dividing region of the root apex and in differentiated cells such as those in the sclerenchyma, pericycle and parenchyma of the central cylinder. Expressed in the intercalary meristem and the elongation zone of internodes.

The enzyme catalyses L-seryl-[protein] + ATP = O-phospho-L-seryl-[protein] + ADP + H(+). The catalysed reaction is L-threonyl-[protein] + ATP = O-phospho-L-threonyl-[protein] + ADP + H(+). It catalyses the reaction [DNA-directed RNA polymerase] + ATP = phospho-[DNA-directed RNA polymerase] + ADP + H(+). In Oryza sativa subsp. japonica (Rice), this protein is Cyclin-dependent kinase A-2 (CDKA-2).